The primary structure comprises 1136 residues: MFSRKKRELMKTPSISKKNRAGSPSPQPSGELPRKDGADAVFPGPSLEPPAGSSGVKATGTLKRPTSLSRHASAAGFPLSGAASWTLGRSHRSPLTAASPGELPTEGAGPDVVEDISHLLADVARFAEGLEKLKECVLRDDLLEARRPRAHECLGEALRVMHQIISKYPLLNTVETLTAAGTLIAKVKAFHYESNNDLEKQEFEKALETIAVAFSSTVSEFLMGEVDSSTLLAVPPGDSSQSMESLYGPGSEGTPPSLEDCDAGCLPAEEVDVLLQRCEGGVDAALLYAKNMAKYMKDLISYLEKRTTLEMEFAKGLQKIAHNCRQSVMQEPHMPLLSIYSLALEQDLEFGHSMVQAVGTLQTQTFMQPLTLRRLEHEKRRKEIKEAWHRAQRKLQEAESNLRKAKQGYVQRCEDHDKARFLVAKAEEEQAGSAPGAGSTATKTLDKRRRLEEEAKNKAEEAMATYRTCVADAKTQKQELEDTKVTALRQIQEVIRQSDQTIKSATISYYQMMHMQTAPLPVHFQMLCESSKLYDPGQQYASHVRQLQRDQEPDVHYDFEPHVSANAWSPVMRARKSSFNVSDVARPEAAGSPPEEGGCTEGTPAKDHRAGRGHQVHKSWPLSISDSDSGLDPGPGAGDFKKFERTSSSGTMSSTEELVDPDGGAGASAFEQADLNGMTPELPVAVPSGPFRHEGLSKAARTHRLRKLRTPAKCRECNSYVYFQGAECEECCLACHKKCLETLAIQCGHKKLQGRLQLFGQDFSHAARSAPDGVPFIVKKCVCEIERRALRTKGIYRVNGVKTRVEKLCQAFENGKELVELSQASPHDISNVLKLYLRQLPEPLISFRLYHELVGLAKDSLKAEAEAKAASRGRQDGSESEAVAVALAGRLRELLRDLPPENRASLQYLLRHLRRIVEVEQDNKMTPGNLGIVFGPTLLRPRPTEATVSLSSLVDYPHQARVIETLIVHYGLVFEEEPEETPGGQDESSNQRAEVVVQVPYLEAGEAVVYPLQEAAADGCRESRVVSNDSDSDLEEASELLSSSEASALGHLSFLEQQQSEASLEVASGSHSGSEEQLEATAREDGDGDEDGPAQQLSGFNTNQSNNVLQAPLPPMRLRGGRMTLGSCRERQPEFV.

Disordered stretches follow at residues 1-73 (MFSR…RHAS) and 91-110 (HRSP…GAGP). Ser-23, Ser-25, Ser-73, Ser-93, and Ser-99 each carry phosphoserine. An F-BAR domain is found at 269 to 539 (EEVDVLLQRC…SSKLYDPGQQ (271 aa)). 2 coiled-coil regions span residues 376 to 412 (EHEK…YVQR) and 440 to 499 (TATK…RQSD). Ser-569, Ser-578, Ser-592, and Ser-619 each carry phosphoserine. The disordered stretch occupies residues 583–662 (DVARPEAAGS…SSTEELVDPD (80 aa)). Low complexity predominate over residues 646-655 (TSSSGTMSST). The Phorbol-ester/DAG-type zinc-finger motif lies at 702–747 (THRLRKLRTPAKCRECNSYVYFQGAECEECCLACHKKCLETLAIQC). The Rho-GAP domain occupies 761–974 (QDFSHAARSA…TLIVHYGLVF (214 aa)). A phosphoserine mark is found at Ser-949, Ser-1027, Ser-1030, and Ser-1032. The interval 1061 to 1136 (EASLEVASGS…SCRERQPEFV (76 aa)) is disordered. Positions 1095 to 1109 (QQLSGFNTNQSNNVL) are enriched in polar residues.

As to quaternary structure, HA-1 forms a complex with MHC class I HLA-A*0201. As to expression, expressed on cells of the hematopoietic lineage. Detected in dendritic cells and epidermal Langerhans cells. Expressed in peripheral blood mononuclear cells, in all leukemia/lymphoma cell lines. Detected also in some solid tumors and tissues such as cancerous and non-cancerous tissue.

Its subcellular location is the cytoplasm. The protein resides in the cell projection. It localises to the ruffle membrane. Functionally, contains a GTPase activator for the Rho-type GTPases (RhoGAP) domain that would be able to negatively regulate the actin cytoskeleton as well as cell spreading. However, also contains N-terminally a BAR-domin which is able to play an autoinhibitory effect on this RhoGAP activity. Its function is as follows. Precursor of the histocompatibility antigen HA-1. More generally, minor histocompatibility antigens (mHags) refer to immunogenic peptide which, when complexed with MHC, can generate an immune response after recognition by specific T-cells. The peptides are derived from polymorphic intracellular proteins, which are cleaved by normal pathways of antigen processing. The binding of these peptides to MHC class I or class II molecules and its expression on the cell surface can stimulate T-cell responses and thereby trigger graft rejection or graft-versus-host disease (GVHD) after hematopoietic stem cell transplantation from HLA-identical sibling donor. GVHD is a frequent complication after bone marrow transplantation (BMT), due to mismatch of minor histocompatibility antigen in HLA-matched sibling marrow transplants. Specifically, mismatching for mHag HA-1 which is recognized as immunodominant, is shown to be associated with the development of severe GVHD after HLA-identical BMT. HA-1 is presented to the cell surface by MHC class I HLA-A*0201, but also by other HLA-A alleles. This complex specifically elicits donor-cytotoxic T-lymphocyte (CTL) reactivity against hematologic malignancies after treatment by HLA-identical allogenic BMT. It induces cell recognition and lysis by CTL. This is Rho GTPase-activating protein 45 from Homo sapiens (Human).